Reading from the N-terminus, the 393-residue chain is METFLFTSESVNEGHPDKLCDQISDAVLDACLEQDPESKVACETCTKTNLVMVFGEITTKANVDYEKIVRDTCRNIGFISDDVGLDADNCKVLVYIEQQSPDIAQGVHGHLTKQPEEIGAGDQGHMFGYATDETPEFMPLSHVLATKLGARLTEVRKNGTCPWLRPDGKTQVTVEYYNENGAMVPVRVHTVLISTQHDETVTNDEIAHDLKEHVIKPVIPEKYLDEKTIFHLNPSGRFVIGGPHGDAGLTGRKIIIDTYGGWGAHGGGAFSGKDPTKVDRSGAYIVRQAAKSVVANGLARRCIVQVSYAIGVPEPLSVFVDTYGTGMIPDKEILKIVKENFDFRPGMIAINLDLKRGGNGRFLKTAAYGHFGRDDTDFTWEVVKPLKCEKAQD.

E9 is a binding site for Mg(2+). An ATP-binding site is contributed by H15. E43 contacts K(+). Positions 56 and 99 each coordinate L-methionine. ATP-binding positions include 167–169 (DGK), 235–238 (SGRF), D246, 252–253 (RK), A269, K273, and K277. D246 contacts L-methionine. K277 lines the L-methionine pocket.

It belongs to the AdoMet synthase family. As to quaternary structure, homotetramer. Requires Mn(2+) as cofactor. It depends on Mg(2+) as a cofactor. Co(2+) is required as a cofactor. The cofactor is K(+).

It is found in the cytoplasm. It carries out the reaction L-methionine + ATP + H2O = S-adenosyl-L-methionine + phosphate + diphosphate. It functions in the pathway amino-acid biosynthesis; S-adenosyl-L-methionine biosynthesis; S-adenosyl-L-methionine from L-methionine: step 1/1. Catalyzes the formation of S-adenosylmethionine from methionine and ATP. The reaction comprises two steps that are both catalyzed by the same enzyme: formation of S-adenosylmethionine (AdoMet) and triphosphate, and subsequent hydrolysis of the triphosphate. This chain is S-adenosylmethionine synthase 3 (SAM3), found in Petunia hybrida (Petunia).